A 673-amino-acid polypeptide reads, in one-letter code: Zinc finger and BTB domain-containing protein 16 (673 aa).

The region spanning 34–96 is the BTB domain; that stretch reads CDVVIMVDSQ…AYTATLQAKA (63 aa). 3 positions are modified to phosphoserine; by PDPK1: Ser-76, Ser-184, and Ser-197. An interaction with RUNX1T1 region spans residues 200 to 300; it reads KAAVDSLMTI…SARELHYGRE (101 aa). Disordered regions lie at residues 215 to 236 and 249 to 332; these read QGTL…GRHP and DEVP…KHLG. Ser-256 carries the phosphoserine; by PDPK1 modification. Thr-282 is subject to Phosphothreonine; by PDPK1. 2 stretches are compositionally biased toward basic and acidic residues: residues 293-302 and 319-331; these read RELHYGREES and RPEH…EKHL. 8 C2H2-type zinc fingers span residues 404 to 426, 432 to 454, 461 to 483, 490 to 512, 518 to 540, 546 to 568, 574 to 596, and 602 to 624; these read EQCS…RKLH, YGCE…LLAH, FVCD…RQTH, VFCL…MEVH, YICS…LRSH, YECE…KRIH, YECN…YRVH, and FECK…LRTH. A Phosphoserine; by PDPK1 modification is found at Ser-628. The C2H2-type 9 zinc finger occupies 630–652; sequence YQCTICTEYCPSLSSMQKHMKGH.

It belongs to the krueppel C2H2-type zinc-finger protein family. As to quaternary structure, binds EPN1. Interacts with ZBTB32 and CUL3. Interacts with ATP7B. Interacts with transcriptional corepressor RUNX1T1 (via its N-terminus); the interaction increases the transcription repression activity of ZBTB16. Interacts (via C2H2-type zinc finger domains 1 and 2) with RNF112. As to expression, within the hematopoietic system, PLZF is expressed in bone marrow, early myeloid cell lines and peripheral blood mononuclear cells. Also expressed in the ovary, and at lower levels, in the kidney and lung.

Its subcellular location is the nucleus. The protein localises to the nuclear body. It participates in protein modification; protein ubiquitination. Functionally, acts as a transcriptional repressor. Transcriptional repression may be mediated through recruitment of histone deacetylases to target promoters. May play a role in myeloid maturation and in the development and/or maintenance of other differentiated tissues. Probable substrate-recognition component of an E3 ubiquitin-protein ligase complex which mediates the ubiquitination and subsequent proteasomal degradation of target proteins. The polypeptide is Zinc finger and BTB domain-containing protein 16 (ZBTB16) (Homo sapiens (Human)).